A 356-amino-acid chain; its full sequence is Dihydroorotate dehydrogenase (quinone) (356 aa).

Residues 67 to 71 (AGFDK) and T91 contribute to the FMN site. Residue K71 coordinates substrate. A substrate-binding site is contributed by 116 to 120 (NRMGF). The FMN site is built by N153 and N186. N186 contributes to the substrate binding site. Catalysis depends on S189, which acts as the Nucleophile. N191 contacts substrate. Positions 228 and 256 each coordinate FMN. Substrate is bound at residue 257–258 (NT). FMN is bound by residues G282, G311, and 332–333 (YT).

This sequence belongs to the dihydroorotate dehydrogenase family. Type 2 subfamily. As to quaternary structure, monomer. The cofactor is FMN.

The protein localises to the cell membrane. It catalyses the reaction (S)-dihydroorotate + a quinone = orotate + a quinol. Its pathway is pyrimidine metabolism; UMP biosynthesis via de novo pathway; orotate from (S)-dihydroorotate (quinone route): step 1/1. Functionally, catalyzes the conversion of dihydroorotate to orotate with quinone as electron acceptor. The sequence is that of Dihydroorotate dehydrogenase (quinone) from Pseudarthrobacter chlorophenolicus (strain ATCC 700700 / DSM 12829 / CIP 107037 / JCM 12360 / KCTC 9906 / NCIMB 13794 / A6) (Arthrobacter chlorophenolicus).